We begin with the raw amino-acid sequence, 69 residues long: MKNMDEERKYGLYSLIIGLLCVIGIVMLNGLICYVLYIIAVPSLLYGIGAFIIPKTRRKDAGKLPFRGY.

Helical transmembrane passes span 15–35 (LIIGLLCVIGIVMLNGLICYV) and 36–56 (LYIIAVPSLLYGIGAFIIPKT).

The protein localises to the cell membrane. This is an uncharacterized protein from Methanocaldococcus jannaschii (strain ATCC 43067 / DSM 2661 / JAL-1 / JCM 10045 / NBRC 100440) (Methanococcus jannaschii).